A 125-amino-acid chain; its full sequence is MIEINFDKMGGLIPAVIQDYENGEVLMVAFMDKKTLDLTLRDGKTWFFSRTRNKYWMKGEESGNTQDVMEVLTDCDADTVVIKVRQNGPAACHTGNRSCFYVKWEDGQWVEHSNPLFNPEEVYKK.

Asp74 serves as a coordination point for Mg(2+). Cys75 lines the Zn(2+) pocket. Mg(2+)-binding residues include Asp76 and Asp78. Residues Cys92 and Cys99 each coordinate Zn(2+).

Belongs to the PRA-CH family. In terms of assembly, homodimer. The cofactor is Mg(2+). Zn(2+) is required as a cofactor.

It localises to the cytoplasm. It carries out the reaction 1-(5-phospho-beta-D-ribosyl)-5'-AMP + H2O = 1-(5-phospho-beta-D-ribosyl)-5-[(5-phospho-beta-D-ribosylamino)methylideneamino]imidazole-4-carboxamide. It functions in the pathway amino-acid biosynthesis; L-histidine biosynthesis; L-histidine from 5-phospho-alpha-D-ribose 1-diphosphate: step 3/9. Functionally, catalyzes the hydrolysis of the adenine ring of phosphoribosyl-AMP. The sequence is that of Phosphoribosyl-AMP cyclohydrolase from Trichlorobacter lovleyi (strain ATCC BAA-1151 / DSM 17278 / SZ) (Geobacter lovleyi).